A 1401-amino-acid chain; its full sequence is Enhancer of mRNA-decapping protein 4 (1401 aa).

N-acetylalanine is present on Ala2. Phosphoserine occurs at positions 3 and 6. The interval 23–42 (DRPAGGPSAESPRPSSAYNG) is disordered. WD repeat units lie at residues 121–164 (QPVA…VISV), 167–206 (SERT…VWRL), 217–269 (ILVH…VWDL), 287–326 (KQGF…FWQI), 335–385 (RCLH…MWCT), 389–426 (TCLQ…LSDV), and 432–475 (YVME…LRHT). Lys125 bears the N6-acetyllysine mark. Residues 545–565 (TFGESRPELGSEGLGSAAHGS) are disordered. Phosphoserine is present on residues Ser560, Ser565, Ser583, and Ser585. Disordered regions lie at residues 603-628 (ASLQ…SSSS) and 662-702 (DGSL…QVPT). A compositionally biased stretch (low complexity) spans 609-628 (TASPSSSSSGSSSSSSSSSS). A compositionally biased stretch (polar residues) spans 663–675 (GSLTMSSSGSLQA). Ser676 is subject to Phosphoserine. The span at 677 to 689 (PRGLLPGLLPAPA) shows a compositional bias: low complexity. The residue at position 693 (Thr693) is a Phosphothreonine. Phosphoserine is present on residues Ser708, Ser723, and Ser725. 2 disordered regions span residues 717–741 (LGLP…TALS) and 778–808 (LLSP…HNTP). Over residues 722 to 741 (ASPSRTRSPDVISSASTALS) the composition is skewed to polar residues. Thr727 is modified (phosphothreonine). Phosphoserine is present on residues Ser729 and Ser741. Thr821 carries the phosphothreonine modification. Residues Ser844, Ser871, Ser875, Ser879, Ser887, Ser890, and Ser892 each carry the phosphoserine modification. The disordered stretch occupies residues 868–946 (QRDSQDASAE…RLTEHQVAEP (79 aa)). The tract at residues 913–934 (GSPRTSPKLKRKSKKDDGDAAM) is sufficient for nuclear localization. Residues 954 to 1025 (IWQQQRELAE…GGQLQEQLTQ (72 aa)) are a coiled coil. Phosphoserine is present on residues Ser967 and Ser1380.

It belongs to the WD repeat EDC4 family. In terms of assembly, part of a decapping complex consisting of DCP1A, DCP2, EDC3, EDC4 and probably DDX6. Part of a complex consisting of DCP1A, EDC3, EDC4 and DDX6. Part of a complex consisting of DCP1B, EDC3, EDC4 and DDX6. Interacts with DCP2. Interacts with RC3H1. Interacts with NBDY. Interacts with TEX19. Interacts with LSM14A. Interacts with DDX6. As to quaternary structure, (Microbial infection) Interacts with rotavirus A non-structural protein 2; this interaction probably plays a role in the sequestration of EDC4 in viral factories. Interacts with rotavirus A non-structural protein 5; this interaction probably plays a role in its sequestration in viral factories.

It is found in the cytoplasm. The protein localises to the P-body. The protein resides in the nucleus. In terms of biological role, in the process of mRNA degradation, seems to play a role in mRNA decapping. Component of a complex containing DCP2 and DCP1A which functions in decapping of ARE-containing mRNAs. Promotes complex formation between DCP1A and DCP2. Enhances the catalytic activity of DCP2 (in vitro). This Homo sapiens (Human) protein is Enhancer of mRNA-decapping protein 4 (EDC4).